We begin with the raw amino-acid sequence, 573 residues long: 60 kDa heat shock protein, mitochondrial (573 aa).

A mitochondrion-targeting transit peptide spans 1–26; it reads MLRLPTVLRQMRPVSRALAPHLTRAY. Lys31 carries the post-translational modification N6-succinyllysine. A phosphoserine mark is found at Ser67 and Ser70. Lys75 is a binding site for ATP. Position 75 is an N6-acetyllysine (Lys75). Lys82 is modified (N6-acetyllysine; alternate). At Lys82 the chain carries N6-succinyllysine; alternate. Residue Lys87 is modified to N6-acetyllysine. Tyr90 bears the Phosphotyrosine mark. At Lys91 the chain carries N6-acetyllysine. 111–115 is an ATP binding site; it reads DGTTT. Lys125 is modified (N6-acetyllysine; alternate). The residue at position 125 (Lys125) is an N6-succinyllysine; alternate. Lys130 carries the post-translational modification N6-acetyllysine. An N6-acetyllysine; alternate modification is found at Lys133. The residue at position 133 (Lys133) is an N6-succinyllysine; alternate. Lys133 bears the N6-malonyllysine; alternate mark. Lys156 carries the post-translational modification N6-acetyllysine. Residues Lys191, Lys202, Lys205, Lys218, and Lys236 each carry the N6-acetyllysine; alternate modification. 5 positions are modified to N6-succinyllysine; alternate: Lys191, Lys202, Lys205, Lys218, and Lys236. Residue Lys249 is modified to N6-acetyllysine. An N6-acetyllysine; alternate modification is found at Lys250. Position 250 is an N6-succinyllysine; alternate (Lys250). Lys269 and Lys292 each carry N6-acetyllysine. Residue Lys301 is modified to N6-succinyllysine. Lys314 is modified (N6-acetyllysine). Position 352 is an N6-acetyllysine; alternate (Lys352). Lys352 carries the post-translational modification N6-succinyllysine; alternate. N6-acetyllysine is present on residues Lys359 and Lys389. Lys396 bears the N6-acetyllysine; alternate mark. Lys396 is subject to N6-succinyllysine; alternate. Position 410 is a phosphoserine (Ser410). Gly440 contributes to the ATP binding site. Position 455 is an N6-acetyllysine; alternate (Lys455). Lys455 carries the N6-succinyllysine; alternate modification. Residue Lys469 is modified to N6-acetyllysine. At Lys481 the chain carries N6-acetyllysine; alternate. At Lys481 the chain carries N6-succinyllysine; alternate. Phosphoserine is present on Ser488. Residue Asp520 participates in ATP binding. A Glycyl lysine isopeptide (Lys-Gly) (interchain with G-Cter in SUMO2) cross-link involves residue Lys551.

This sequence belongs to the chaperonin (HSP60) family. As to quaternary structure, homoheptamer arranged in a ring structure. The functional units of these chaperonins consist of heptameric rings of the large subunit Hsp60, which function as a back-to-back double ring. Interacts with 2 heptameric Hsp10 rings to form the symmetrical football complex. Interacts with HRAS. Interacts with ATAD3A. Interacts with ETFBKMT and EEF1AKMT3. Interacts with MFHAS1.

It is found in the mitochondrion matrix. It catalyses the reaction ATP + H2O + a folded polypeptide = ADP + phosphate + an unfolded polypeptide.. Chaperonin implicated in mitochondrial protein import and macromolecular assembly. Together with Hsp10, facilitates the correct folding of imported proteins. May also prevent misfolding and promote the refolding and proper assembly of unfolded polypeptides generated under stress conditions in the mitochondrial matrix. The functional units of these chaperonins consist of heptameric rings of the large subunit Hsp60, which function as a back-to-back double ring. In a cyclic reaction, Hsp60 ring complexes bind one unfolded substrate protein per ring, followed by the binding of ATP and association with 2 heptameric rings of the co-chaperonin Hsp10. This leads to sequestration of the substrate protein in the inner cavity of Hsp60 where, for a certain period of time, it can fold undisturbed by other cell components. Synchronous hydrolysis of ATP in all Hsp60 subunits results in the dissociation of the chaperonin rings and the release of ADP and the folded substrate protein. This Rattus norvegicus (Rat) protein is 60 kDa heat shock protein, mitochondrial (Hspd1).